The sequence spans 126 residues: Probable S-adenosyl-L-methionine-binding protein MJ1583 (126 aa).

Residues 4 to 126 (LKPIGVVEQN…FSEKLDCPKI (123 aa)) enclose the TsaA-like domain. S-adenosyl-L-methionine-binding positions include 45 to 46 (HK), R75, and 106 to 109 (YNET).

The protein belongs to the tRNA methyltransferase O family.

This chain is Probable S-adenosyl-L-methionine-binding protein MJ1583, found in Methanocaldococcus jannaschii (strain ATCC 43067 / DSM 2661 / JAL-1 / JCM 10045 / NBRC 100440) (Methanococcus jannaschii).